We begin with the raw amino-acid sequence, 813 residues long: Protein PPP4R3C1 (813 aa).

The tract at residues 730–813 (NESESAIEGQ…PPPKRPNLST (84 aa)) is disordered. Residues 777-788 (YDTDDENDDDPY) are compositionally biased toward acidic residues.

It belongs to the SMEK family.

This is Protein PPP4R3C1 from Mus musculus (Mouse).